The primary structure comprises 238 residues: SPEG neighbor protein (238 aa).

One can recognise an IQ domain in the interval 29-55; the sequence is QSAAIRIQASYRGHRSRKELREKGPPR. Ig-like domains follow at residues 54–143 and 147–236; these read PRVL…ARIL and PTKI…ARVD.

In Homo sapiens (Human), this protein is SPEG neighbor protein.